The sequence spans 114 residues: 11.9 kDa wall protein (114 aa).

A propeptide spanning residues Met-1 to Arg-6 is cleaved from the precursor.

Its subcellular location is the secreted. The protein resides in the cell wall. May play a role in the structure of the hypha-forming fruit bodies. The polypeptide is 11.9 kDa wall protein (TDF-1) (Tuber dryophilum (Truffle)).